Here is a 184-residue protein sequence, read N- to C-terminus: Cell division protein ZapC (184 aa).

This sequence belongs to the ZapC family. In terms of assembly, interacts directly with FtsZ.

It localises to the cytoplasm. Its function is as follows. Contributes to the efficiency of the cell division process by stabilizing the polymeric form of the cell division protein FtsZ. Acts by promoting interactions between FtsZ protofilaments and suppressing the GTPase activity of FtsZ. This chain is Cell division protein ZapC, found in Idiomarina loihiensis (strain ATCC BAA-735 / DSM 15497 / L2-TR).